The following is a 492-amino-acid chain: Replication factor C large subunit (492 aa).

46 to 53 (GPPGSGKT) provides a ligand contact to ATP. A disordered region spans residues 445–492 (VIPKRPKISDNQISEILTKDNNPKDDVKKASKKPESTSKKQATLDKFF). Residues 461–482 (LTKDNNPKDDVKKASKKPESTS) show a composition bias toward basic and acidic residues.

It belongs to the activator 1 small subunits family. RfcL subfamily. Heteromultimer composed of small subunits (RfcS) and large subunits (RfcL).

Its function is as follows. Part of the RFC clamp loader complex which loads the PCNA sliding clamp onto DNA. The sequence is that of Replication factor C large subunit from Methanococcus vannielii (strain ATCC 35089 / DSM 1224 / JCM 13029 / OCM 148 / SB).